Reading from the N-terminus, the 300-residue chain is Transcription factor E2F5 (300 aa).

Residues 2 to 73 (GSSRHEKSLG…KNSIQWKGVG (72 aa)) mediate DNA binding. The segment at 31–53 (LKAAADTLAVRQKRRIYDITNVL) is leucine-zipper. Residues 36-73 (DTLAVRQKRRIYDITNVLEGIDLIEKKSKNSIQWKGVG) carry the DEF box motif. Residues 74–170 (AGCNTKEVID…GQNGQKKYQI (97 aa)) are dimerization. Positions 191–250 (SKPVVFPVPPPDDLTQPSSQSSTSVTPPKSTMAAQNLPEQHVSERSQNFQQTPATEISSG) are disordered. A compositionally biased stretch (low complexity) spans 203-221 (DLTQPSSQSSTSVTPPKST). The span at 235–246 (RSQNFQQTPATE) shows a compositional bias: polar residues. The tract at residues 242-300 (TPATEISSGSISGDIIDELMSSDVFPLLRLSPTPADDYNFNLDDNEGVCDLFDVQILNY) is transactivation. Positions 277-294 (DDYNFNLDDNEGVCDLFD) are RBL2 association.

This sequence belongs to the E2F/DP family. Component of the DRTF1/E2F transcription factor complex. Binds cooperatively with DP-1 to E2F sites. Interaction with retinoblastoma protein RB1 or proteins RBL1 and RBL2 inhibits the E2F transactivation domain. Component of the DREAM complex (also named LINC complex) at least composed of E2F4, E2F5, LIN9, LIN37, LIN52, LIN54, MYBL1, MYBL2, RBL1, RBL2, RBBP4, TFDP1 and TFDP2. The complex exists in quiescent cells where it represses cell cycle-dependent genes. It dissociates in S phase when LIN9, LIN37, LIN52 and LIN54 form a subcomplex that binds to MYBL2. As to expression, found in placenta followed by kidney, lung and brain.

The protein resides in the nucleus. Functionally, transcriptional activator that binds to E2F sites, these sites are present in the promoter of many genes whose products are involved in cell proliferation. May mediate growth factor-initiated signal transduction. It is likely involved in the early responses of resting cells to growth factor stimulation. Specifically required for multiciliate cell differentiation: together with MCIDAS and E2F5, binds and activate genes required for centriole biogenesis. The polypeptide is Transcription factor E2F5 (E2f5) (Rattus norvegicus (Rat)).